The chain runs to 88 residues: Synaptonemal complex central element protein 3 (88 aa).

A coiled-coil region spans residues 7–75 (EERNYDNMLK…FVNCKEEMEK (69 aa)).

Homodimer. Can form higher-order homooligomers. Interacts with SYCP1 (via tetrameric core); the interaction remodels SYCP1 homotetramers to 2:1 heterotrimers with SYCE3. SYCP1/SYCE3 heterotrimers form lattice assemblies as part of the mature synaptonemal complex via both lateral and head-to-head interactions. Interacts with the SYCE1-SIX6OS1 complex; the interaction recruits the SYCE1-SIX6OS1 complex to the central element of the synaptonemal complex. Interacts with the SYCE2-TEX12 complex; the interaction promotes fibrous assembly of SYCE2-TEX12 as part of the synaptonemal complex central element. Interacts with SYCE1. Interacts with SYCE2. Interacts with proteasome subunit PSMA8; to participate in meiosis progression during spermatogenesis. Interacts with SPO16.

It is found in the nucleus. The protein localises to the chromosome. Major component of the transverse central element of synaptonemal complexes (SCS), formed between homologous chromosomes during meiotic prophase. Required for the assembly of the central element of the synaptonemal complex during meiosis, via remodeling of SYCP1 lattice structures and promoting recruitment of SYCE2-TEX12 and SYCE1-SIX60S1 complexes. Required for chromosome loading of the central element-specific SCS proteins, and for initiating synapsis between homologous chromosomes. Chromosome loading appears to require SYCP1. Required for fertility and normal testis development. The sequence is that of Synaptonemal complex central element protein 3 from Homo sapiens (Human).